Here is a 145-residue protein sequence, read N- to C-terminus: uncharacterized protein (145 aa).

The 145-residue stretch at 1-145 folds into the CBM3 domain; the sequence is LQYRAADTNA…NGQIVWGTAP (145 aa).

This is an uncharacterized protein from Paenibacillus lautus (Bacillus lautus).